Reading from the N-terminus, the 131-residue chain is Profilin-1 (131 aa).

This sequence belongs to the profilin family. Occurs in many kinds of cells as a complex with monomeric actin in a 1:1 ratio.

It is found in the cytoplasm. It localises to the cytoskeleton. Functionally, binds to actin and affects the structure of the cytoskeleton. At high concentrations, profilin prevents the polymerization of actin, whereas it enhances it at low concentrations. By binding to PIP2, it inhibits the formation of IP3 and DG. This is Profilin-1 (PRO1) from Ricinus communis (Castor bean).